The primary structure comprises 476 residues: Splicing factor ESS-2 homolog (476 aa).

An N-acetylmethionine modification is found at Met-1. Over residues 1-18 the composition is skewed to low complexity; that stretch reads METPGASASSLLLPAASR. Disordered stretches follow at residues 1-36 and 91-148; these read METP…SKQR and LGKM…LPSL. Thr-3 carries the phosphothreonine modification. Residues 133-142 are compositionally biased toward acidic residues; that stretch reads DGEAGEEEEK. Lys-142 participates in a covalent cross-link: Glycyl lysine isopeptide (Lys-Gly) (interchain with G-Cter in SUMO2). At Ser-292 the chain carries Phosphoserine. The residue at position 386 (Thr-386) is a Phosphothreonine. Residues Ser-391 and Ser-395 each carry the phosphoserine modification. The interval 413 to 465 is disordered; the sequence is ALRASYTPSPARSTHLKTPASGLQTPTSTPAPGSATRTPLTQDPASITDNLLQ. A compositionally biased stretch (low complexity) spans 437–451; it reads TPTSTPAPGSATRTP. A compositionally biased stretch (polar residues) spans 452–463; the sequence is LTQDPASITDNL.

The protein belongs to the ESS2 family. In terms of assembly, identified in the spliceosome C complex. Interacts with FRA10AC1. As to expression, highly expressed in heart, brain and skeletal muscle. Detected at low levels in placenta.

The protein localises to the nucleus. May be involved in pre-mRNA splicing. The polypeptide is Splicing factor ESS-2 homolog (Homo sapiens (Human)).